Here is a 326-residue protein sequence, read N- to C-terminus: Biotin synthase (326 aa).

The Radical SAM core domain occupies 40–264; the sequence is GQVQACTLVS…VLPRSYVRLA (225 aa). [4Fe-4S] cluster is bound by residues Cys-55, Cys-59, and Cys-62. Residues Cys-99, Cys-130, Cys-190, and Arg-262 each coordinate [2Fe-2S] cluster.

The protein belongs to the radical SAM superfamily. Biotin synthase family. As to quaternary structure, homodimer. [4Fe-4S] cluster serves as cofactor. The cofactor is [2Fe-2S] cluster.

It catalyses the reaction (4R,5S)-dethiobiotin + (sulfur carrier)-SH + 2 reduced [2Fe-2S]-[ferredoxin] + 2 S-adenosyl-L-methionine = (sulfur carrier)-H + biotin + 2 5'-deoxyadenosine + 2 L-methionine + 2 oxidized [2Fe-2S]-[ferredoxin]. Its pathway is cofactor biosynthesis; biotin biosynthesis; biotin from 7,8-diaminononanoate: step 2/2. Functionally, catalyzes the conversion of dethiobiotin (DTB) to biotin by the insertion of a sulfur atom into dethiobiotin via a radical-based mechanism. The polypeptide is Biotin synthase (Halorhodospira halophila (strain DSM 244 / SL1) (Ectothiorhodospira halophila (strain DSM 244 / SL1))).